A 327-amino-acid polypeptide reads, in one-letter code: MSHLAELVANAAAAINQASDVAALDNVRVEYLGKKGHLTLQMTTLRDLPPEERPAAGAVINAAKEQVQQALNARKAELESAALNARLAAETIDISLPGRRIENGGLHPVTRTIDRIESFFGELGFTVATGPEIEDDYHNFDALNIPGHHPARADHDTFWFDATRLLRTQTSGVQIRTMKAQQPPIRIIAPGRVYRNDYDQTHTPMFHQMEGLIVDTNISFTNLKGTLHDFLRNFFEEDLQIRFRPSYFPFTEPSAEVDVMGKNGKWLEVLGCGMVHPNVLRNVGIDPEIYSGFAFGMGMERLTMLRYGVTDLRSFFENDLRFLKQFK.

Glutamate 252 contributes to the Mg(2+) binding site.

It belongs to the class-II aminoacyl-tRNA synthetase family. Phe-tRNA synthetase alpha subunit type 1 subfamily. Tetramer of two alpha and two beta subunits. It depends on Mg(2+) as a cofactor.

Its subcellular location is the cytoplasm. The enzyme catalyses tRNA(Phe) + L-phenylalanine + ATP = L-phenylalanyl-tRNA(Phe) + AMP + diphosphate + H(+). This chain is Phenylalanine--tRNA ligase alpha subunit, found in Salmonella agona (strain SL483).